The primary structure comprises 326 residues: DNA-directed RNA polymerase subunit alpha (326 aa).

The segment at 1–231 is alpha N-terminal domain (alpha-NTD); that stretch reads MQSNSLLKPR…DQLSVFADLE (231 aa). Positions 245–326 are alpha C-terminal domain (alpha-CTD); that stretch reads IDPVLLRPVD…WPPAGLEKLG (82 aa).

It belongs to the RNA polymerase alpha chain family. Homodimer. The RNAP catalytic core consists of 2 alpha, 1 beta, 1 beta' and 1 omega subunit. When a sigma factor is associated with the core the holoenzyme is formed, which can initiate transcription.

It carries out the reaction RNA(n) + a ribonucleoside 5'-triphosphate = RNA(n+1) + diphosphate. Functionally, DNA-dependent RNA polymerase catalyzes the transcription of DNA into RNA using the four ribonucleoside triphosphates as substrates. This is DNA-directed RNA polymerase subunit alpha from Aromatoleum aromaticum (strain DSM 19018 / LMG 30748 / EbN1) (Azoarcus sp. (strain EbN1)).